The primary structure comprises 649 residues: DNA mismatch repair protein MutL (649 aa).

The protein belongs to the DNA mismatch repair MutL/HexB family.

Functionally, this protein is involved in the repair of mismatches in DNA. It is required for dam-dependent methyl-directed DNA mismatch repair. May act as a 'molecular matchmaker', a protein that promotes the formation of a stable complex between two or more DNA-binding proteins in an ATP-dependent manner without itself being part of a final effector complex. The polypeptide is DNA mismatch repair protein MutL (Streptococcus pneumoniae serotype 19F (strain G54)).